The chain runs to 670 residues: AAAQRRQNDSSVFLAIMVAAAVESESSLTDGDAGALLLQDISEWDEVFRFDRLEAVERAAHAAAAAAFGAFVARGDWTASAAAAFQAAGKQIAFMAAFSTVAGAKGSATVRDADAFAAKFASAAALQELVGNNSPISFFIFDLLFAAILFASKAKAANQAAFAAAAELAAESLFVRLPSLHQVSFFALAGFAAVAAHRHMNGYGSHTFKLVAKDGSVYCSKFWYKADQGQAAEVWKDAEEVAAEDVDYFRDLNFQAEAAGRYPLWELASQVMTFSDFEIDPFNENIPTKVVPRESVPLIVDAELLLNRNPLNMFAEVEQVFMDVAAASKGADEVEDPLIQRQFAYIDTHLSELTASYGIPVCRPYATVLNDQEDGARYDDVQDVLVIAPNAFSASAVEVQIPAAAAFNLAAARVAAAGDVRVNAVVEADQRKQSRQFWASDVNAQKKRLVDAFRMEVASAVSASIQVDVTVEFSFVAAAAAARIAAAVGSAAAGALANRRQIKVIASLAVLAKADAKVRQKNALESSSQAVAVDAKAAAQDIVDSSDAANVVTVAREFAVLPQTAAADAAEFVAAASAKAFSSFPAMEVISVAAAAGAVAEPARASLDLNMAMFFSRIVASRGAAANAIAALVKASRDGVFVAAVLAKAAANNRAAEAIFKFEVRQAVDA.

Residues His-61 and Asn-132 contribute to the active site. Tyr-345 lines the heme pocket.

It belongs to the catalase family. As to quaternary structure, homotetramer. Requires heme as cofactor.

The protein localises to the peroxisome matrix. It catalyses the reaction 2 H2O2 = O2 + 2 H2O. Its function is as follows. Catalyzes the degradation of hydrogen peroxide (H(2)O(2)) generated by peroxisomal oxidases to water and oxygen, thereby protecting cells from the toxic effects of hydrogen peroxide. This Penicillium janthinellum (Penicillium vitale) protein is Catalase.